The following is a 721-amino-acid chain: Mitogen-activated protein kinase 6 (721 aa).

A Peptide (Met-Gly) (interchain with G-Cter in ubiquitin) cross-link involves residue Met1. The 297-residue stretch at 20–316 (YMDLKPLGCG…AEEALSHPYM (297 aa)) folds into the Protein kinase domain. Residues 26–34 (LGCGGNGLV) and Lys49 contribute to the ATP site. Asp152 acts as the Proton acceptor in catalysis. Ser189 is subject to Phosphoserine; by PAK1, PAK2 and PAK3. An SEG motif motif is present at residues 189-191 (SEG). The short motif at 332 to 337 (FHIEDE) is the FRIEDE motif element. Residues Ser386, Ser452, Ser556, Ser558, Ser665, and Ser684 each carry the phosphoserine modification. A compositionally biased stretch (polar residues) spans 701–715 (AMKSSPQIPHQTYSS). The disordered stretch occupies residues 701-721 (AMKSSPQIPHQTYSSILKHLN).

This sequence belongs to the protein kinase superfamily. CMGC Ser/Thr protein kinase family. MAP kinase subfamily. Heterodimer with ERK4/MAPK4. Interacts with (via FRIEDE motif) MAPKAPK5. Interacts with UBE3A; this interaction may be indirect and mediated by HERC2, possibly via HERC2 interaction with NEURL4. Mg(2+) is required as a cofactor. Post-translationally, phosphorylated at Ser-189 by PAK1, PAK2 and PAK3 resulting in catalytic activation. Phosphorylated by MAPKAPK5 at other sites. Ubiquitination at Met-1 leads to degradation by the proteasome pathway.

The protein resides in the cytoplasm. The protein localises to the nucleus. The enzyme catalyses L-seryl-[protein] + ATP = O-phospho-L-seryl-[protein] + ADP + H(+). The catalysed reaction is L-threonyl-[protein] + ATP = O-phospho-L-threonyl-[protein] + ADP + H(+). Activated by phosphorylation at Ser-189. Functionally, atypical MAPK protein. Phosphorylates microtubule-associated protein 2 (MAP2) and MAPKAPK5. The precise role of the complex formed with MAPKAPK5 is still unclear, but the complex follows a complex set of phosphorylation events: upon interaction with atypical MAPKAPK5, ERK3/MAPK6 is phosphorylated at Ser-189 and then mediates phosphorylation and activation of MAPKAPK5, which in turn phosphorylates ERK3/MAPK6. May promote entry in the cell cycle. The chain is Mitogen-activated protein kinase 6 (MAPK6) from Pongo abelii (Sumatran orangutan).